The primary structure comprises 250 residues: Corrinoid adenosyltransferase MMAB (250 aa).

A mitochondrion-targeting transit peptide spans 1–32; the sequence is MAVCGLGSRLGLGSRLGLRGCFGAARLLYPRF. Residues 34–59 are disordered; the sequence is SRGPQGVEDGDRPQPSSKTPRIPKIY. Residues 60–63, 68–69, and Lys78 contribute to the ATP site; these read TKTG and SS. Position 134 is a phosphoserine (Ser134). Residue 190 to 194 coordinates ATP; the sequence is RRAER. An N6-succinyllysine modification is found at Lys211. Asn214 is an ATP binding site. At Lys230 the chain carries N6-acetyllysine; alternate. Lys230 carries the post-translational modification N6-succinyllysine; alternate.

The protein belongs to the Cob(I)alamin adenosyltransferase family. As to quaternary structure, homotrimer. In terms of tissue distribution, expressed in liver and skeletal muscle.

It is found in the mitochondrion. The catalysed reaction is cob(I)alamin-[corrinoid adenosyltransferase] + ATP = apo-[corrinoid adenosyltransferase] + adenosylcob(III)alamin + triphosphate. Functionally, converts cob(I)alamin to adenosylcobalamin (adenosylcob(III)alamin), a coenzyme for methylmalonyl-CoA mutase, therefore participates in the final step of the vitamin B12 conversion. Generates adenosylcobalamin (AdoCbl) and directly delivers the cofactor to MUT in a transfer that is stimulated by ATP-binding to MMAB and gated by MMAA. The sequence is that of Corrinoid adenosyltransferase MMAB from Homo sapiens (Human).